Here is a 427-residue protein sequence, read N- to C-terminus: Histidine--tRNA ligase (427 aa).

This sequence belongs to the class-II aminoacyl-tRNA synthetase family. As to quaternary structure, homodimer.

It is found in the cytoplasm. The enzyme catalyses tRNA(His) + L-histidine + ATP = L-histidyl-tRNA(His) + AMP + diphosphate + H(+). The chain is Histidine--tRNA ligase from Streptococcus suis (strain 98HAH33).